Reading from the N-terminus, the 323-residue chain is ADP-L-glycero-D-manno-heptose-6-epimerase (323 aa).

NADP(+) contacts are provided by residues 10–11 (FI), 31–32 (DN), Lys38, Arg53, 75–79 (MGACS), and Asn92. The Proton acceptor role is filled by Tyr143. Residue Lys147 participates in NADP(+) binding. Position 170 (Asn170) interacts with substrate. The NADP(+) site is built by Val171 and Lys179. Lys179 (proton acceptor) is an active-site residue. Residues Asp181, Lys188, 202–205 (FRSC), Arg216, and Tyr281 contribute to the substrate site.

It belongs to the NAD(P)-dependent epimerase/dehydratase family. HldD subfamily. Homopentamer. The cofactor is NADP(+).

The enzyme catalyses ADP-D-glycero-beta-D-manno-heptose = ADP-L-glycero-beta-D-manno-heptose. The protein operates within nucleotide-sugar biosynthesis; ADP-L-glycero-beta-D-manno-heptose biosynthesis; ADP-L-glycero-beta-D-manno-heptose from D-glycero-beta-D-manno-heptose 7-phosphate: step 4/4. Catalyzes the interconversion between ADP-D-glycero-beta-D-manno-heptose and ADP-L-glycero-beta-D-manno-heptose via an epimerization at carbon 6 of the heptose. This Nitratidesulfovibrio vulgaris (strain DP4) (Desulfovibrio vulgaris) protein is ADP-L-glycero-D-manno-heptose-6-epimerase.